A 31-amino-acid polypeptide reads, in one-letter code: GSIPCAESCVYIPCITGIAGCSCKNKVCYYN.

A cross-link (cyclopeptide (Gly-Asn)) is located at residues 1–31; the sequence is GSIPCAESCVYIPCITGIAGCSCKNKVCYYN. Cystine bridges form between Cys-5–Cys-21, Cys-9–Cys-23, and Cys-14–Cys-28.

It belongs to the cyclotide family. Bracelet subfamily. Post-translationally, this is a cyclic peptide.

Probably participates in a plant defense mechanism. The protein is Cyclotide vico-B of Viola cotyledon (Violeta).